A 1692-amino-acid polypeptide reads, in one-letter code: Protein TOPAZ1 (1692 aa).

Disordered regions lie at residues 1–135 (MRRP…PGLD), 600–629 (ELSRRGSEVISNTTEDTQLTSETQSLTGNK), and 894–919 (EPNVAGEHQSTDSKYMETPVKKEPSD). A compositionally biased stretch (gly residues) spans 31–40 (GAAGGCGPEA). The segment covering 95-116 (SDPRGLEAAKEAELPLQTERHT) has biased composition (basic and acidic residues). Residues 608-627 (VISNTTEDTQLTSETQSLTG) are compositionally biased toward polar residues. Positions 902–919 (QSTDSKYMETPVKKEPSD) are enriched in basic and acidic residues.

Its subcellular location is the cytoplasm. The protein resides in the cytosol. Its function is as follows. Important for normal spermatogenesis and male fertility. Specifically required for progression to the post-meiotic stages of spermatocyte development. Seems to be necessary for normal expression levels of a number of testis-expressed gene transcripts, although its role in this process is unclear. The chain is Protein TOPAZ1 (TOPAZ1) from Homo sapiens (Human).